A 257-amino-acid chain; its full sequence is MGQKVNPNGLRFGINKQWLSRWVPTDQLQMAKWLVEDDKIRKYLSTKYKNAGIDHVEIERDQQRVNVYVYAVQSGLLIGTEASEKKLIELAINKIVGRKQLVSLKVVEVQIPELQASLMAREIADAIENRVSFRIAQKMVIKKVLKAGARGIKTHVSGRLGGVEMAREEGYTQGVMTLHTLRADIDYSMQEAHTTYGIIGVKVWINRGELFGNKLVNSVAHAANKEFSRSSKPKKGSFNRSSRSKNTKPAPKQAVSE.

A KH type-2 domain is found at 40–110; sequence IRKYLSTKYK…LVSLKVVEVQ (71 aa). A disordered region spans residues 223–257; sequence ANKEFSRSSKPKKGSFNRSSRSKNTKPAPKQAVSE. The segment covering 231–246 has biased composition (basic residues); sequence SKPKKGSFNRSSRSKN.

The protein belongs to the universal ribosomal protein uS3 family. As to quaternary structure, part of the 30S ribosomal subunit. Forms a tight complex with proteins S10 and S14.

In terms of biological role, binds the lower part of the 30S subunit head. Binds mRNA in the 70S ribosome, positioning it for translation. The sequence is that of Small ribosomal subunit protein uS3 from Ureaplasma parvum serovar 3 (strain ATCC 27815 / 27 / NCTC 11736).